Consider the following 345-residue polypeptide: 4-hydroxyproline 2-epimerase 1 (345 aa).

Glutamine 85 contributes to the substrate binding site. Serine 93 (proton acceptor) is an active-site residue. Residues 94 to 95 (GS) and aspartate 251 contribute to the substrate site. Cysteine 255 acts as the Proton donor in catalysis. 256–257 (GT) provides a ligand contact to substrate.

The protein belongs to the proline racemase family.

The catalysed reaction is trans-4-hydroxy-L-proline = cis-4-hydroxy-D-proline. In terms of biological role, catalyzes the epimerization of trans-4-hydroxy-L-proline (t4LHyp) to cis-4-hydroxy-D-proline (c4DHyp). May be involved in a degradation pathway of t4LHyp. Can also catalyze the epimerization of trans-3-hydroxy-L-proline (t3LHyp) to cis-3-hydroxy-D-proline (c3DHyp) in vitro. Displays no proline racemase activity. This is 4-hydroxyproline 2-epimerase 1 from Rhizobium rhizogenes (strain K84 / ATCC BAA-868) (Agrobacterium radiobacter).